The primary structure comprises 417 residues: Serine hydroxymethyltransferase (417 aa).

Residues leucine 119 and 123–125 (GHL) contribute to the (6S)-5,6,7,8-tetrahydrofolate site. Lysine 227 bears the N6-(pyridoxal phosphate)lysine mark.

This sequence belongs to the SHMT family. As to quaternary structure, homodimer. Pyridoxal 5'-phosphate is required as a cofactor.

Its subcellular location is the cytoplasm. It carries out the reaction (6R)-5,10-methylene-5,6,7,8-tetrahydrofolate + glycine + H2O = (6S)-5,6,7,8-tetrahydrofolate + L-serine. The protein operates within one-carbon metabolism; tetrahydrofolate interconversion. Its pathway is amino-acid biosynthesis; glycine biosynthesis; glycine from L-serine: step 1/1. Catalyzes the reversible interconversion of serine and glycine with tetrahydrofolate (THF) serving as the one-carbon carrier. This reaction serves as the major source of one-carbon groups required for the biosynthesis of purines, thymidylate, methionine, and other important biomolecules. Also exhibits THF-independent aldolase activity toward beta-hydroxyamino acids, producing glycine and aldehydes, via a retro-aldol mechanism. The protein is Serine hydroxymethyltransferase of Buchnera aphidicola subsp. Cinara cedri (strain Cc).